The chain runs to 62 residues: Inner membrane protein p12 (62 aa).

A helical membrane pass occupies residues 16–36 (LLIVAIVVVIMAIMLYYFWWM).

Belongs to the asfivirus inner membrane protein p12 family. As to quaternary structure, homomultimer; disulfide-linked. Post-translationally, not glycosylated.

The protein resides in the virion membrane. The sequence is that of Inner membrane protein p12 from African swine fever virus (isolate Pig/Kenya/KEN-50/1950) (ASFV).